A 227-amino-acid polypeptide reads, in one-letter code: Cytochrome c oxidase subunit 2 (227 aa).

At 1-14 (MAYPLQLGFQDATS) the chain is on the mitochondrial intermembrane side. The helical transmembrane segment at 15 to 45 (PVMEELLHFHDHTLMIIFLISSLVLYIIMLM) threads the bilayer. Residues 46 to 59 (LTTKLIHTNMMNVQ) are Mitochondrial matrix-facing. A helical membrane pass occupies residues 60–87 (EMEMIWTILPAIILILIALPSLHTLYMM). Over 88-227 (DEINNPLLTI…YFESWSASLA (140 aa)) the chain is Mitochondrial intermembrane. Residues H161, C196, E198, C200, H204, and M207 each contribute to the Cu cation site. Residue E198 coordinates Mg(2+). Residue Y218 is modified to Phosphotyrosine.

Belongs to the cytochrome c oxidase subunit 2 family. As to quaternary structure, component of the cytochrome c oxidase (complex IV, CIV), a multisubunit enzyme composed of 14 subunits. The complex is composed of a catalytic core of 3 subunits MT-CO1, MT-CO2 and MT-CO3, encoded in the mitochondrial DNA, and 11 supernumerary subunits COX4I, COX5A, COX5B, COX6A, COX6B, COX6C, COX7A, COX7B, COX7C, COX8 and NDUFA4, which are encoded in the nuclear genome. The complex exists as a monomer or a dimer and forms supercomplexes (SCs) in the inner mitochondrial membrane with NADH-ubiquinone oxidoreductase (complex I, CI) and ubiquinol-cytochrome c oxidoreductase (cytochrome b-c1 complex, complex III, CIII), resulting in different assemblies (supercomplex SCI(1)III(2)IV(1) and megacomplex MCI(2)III(2)IV(2)). Found in a complex with TMEM177, COA6, COX18, COX20, SCO1 and SCO2. Interacts with TMEM177 in a COX20-dependent manner. Interacts with COX20. Interacts with COX16. Requires Cu cation as cofactor.

It is found in the mitochondrion inner membrane. It carries out the reaction 4 Fe(II)-[cytochrome c] + O2 + 8 H(+)(in) = 4 Fe(III)-[cytochrome c] + 2 H2O + 4 H(+)(out). Its function is as follows. Component of the cytochrome c oxidase, the last enzyme in the mitochondrial electron transport chain which drives oxidative phosphorylation. The respiratory chain contains 3 multisubunit complexes succinate dehydrogenase (complex II, CII), ubiquinol-cytochrome c oxidoreductase (cytochrome b-c1 complex, complex III, CIII) and cytochrome c oxidase (complex IV, CIV), that cooperate to transfer electrons derived from NADH and succinate to molecular oxygen, creating an electrochemical gradient over the inner membrane that drives transmembrane transport and the ATP synthase. Cytochrome c oxidase is the component of the respiratory chain that catalyzes the reduction of oxygen to water. Electrons originating from reduced cytochrome c in the intermembrane space (IMS) are transferred via the dinuclear copper A center (CU(A)) of subunit 2 and heme A of subunit 1 to the active site in subunit 1, a binuclear center (BNC) formed by heme A3 and copper B (CU(B)). The BNC reduces molecular oxygen to 2 water molecules using 4 electrons from cytochrome c in the IMS and 4 protons from the mitochondrial matrix. The sequence is that of Cytochrome c oxidase subunit 2 (MT-CO2) from Elephas maximus (Indian elephant).